We begin with the raw amino-acid sequence, 335 residues long: 2-acylglycerol O-acyltransferase 1 (335 aa).

2 helical membrane passes run 24–44 and 104–124; these read WVLS…MLVL and YIFG…NFCT. The N-linked (GlcNAc...) asparagine glycan is linked to Asn180.

This sequence belongs to the diacylglycerol acyltransferase family. In terms of tissue distribution, expressed at high level in kidney and stomach. Expressed at lower level in brown and white adipose tissue, uterus and liver. Not detected in small intestine.

Its subcellular location is the endoplasmic reticulum membrane. The catalysed reaction is a 2-acylglycerol + an acyl-CoA = a 1,2-diacylglycerol + CoA. The enzyme catalyses 2-(9Z-octadecenoyl)-glycerol + butanoyl-CoA = 1-butanoyl-2-(9Z-octadecenoyl)-glycerol + CoA. It carries out the reaction 2-(9Z-octadecenoyl)-glycerol + octanoyl-CoA = 1-octanoyl-2-(9Z-octadecenoyl)-glycerol + CoA. It catalyses the reaction 2-(9Z-octadecenoyl)-glycerol + dodecanoyl-CoA = 1-dodecanoyl-2-(9Z-octadecenoyl)-glycerol + CoA. The catalysed reaction is 2-(9Z-octadecenoyl)-glycerol + tetradecanoyl-CoA = 1-tetradecanoyl-2-(9Z-octadecenoyl)-glycerol + CoA. The enzyme catalyses 2-(9Z-octadecenoyl)-glycerol + hexadecanoyl-CoA = 1-hexadecanoyl-2-(9Z-octadecenoyl)-glycerol + CoA. It carries out the reaction 2-(9Z-octadecenoyl)-glycerol + octadecanoyl-CoA = 1-octadecanoyl-2-(9Z-octadecenoyl)-glycerol + CoA. It catalyses the reaction eicosanoyl-CoA + 2-(9Z-octadecenoyl)-glycerol = 1-eicosanoyl-2-(9Z-octadecenoyl)-glycerol + CoA. The catalysed reaction is 2-(9Z-octadecenoyl)-glycerol + (9Z)-octadecenoyl-CoA = 1,2-di-(9Z-octadecenoyl)-glycerol + CoA. The enzyme catalyses 2-(9Z-octadecenoyl)-glycerol + (9Z,12Z)-octadecadienoyl-CoA = 1-(9Z,12Z-octadecadienoyl)-2-(9Z-octadecenoyl)-glycerol + CoA. It carries out the reaction 2-(9Z-octadecenoyl)-glycerol + (5Z,8Z,11Z,14Z)-eicosatetraenoyl-CoA = 1-(5Z,8Z,11Z,14Z-eicosatetraenoyl)-2-(9Z-octadecenoyl)-glycerol + CoA. It catalyses the reaction a 2-acylglycerol + an acyl-CoA = a 1,2-diacyl-sn-glycerol + CoA. The catalysed reaction is a 2-acylglycerol + an acyl-CoA = a 2,3-diacyl-sn-glycerol + CoA. The enzyme catalyses a 1-acylglycerol + an acyl-CoA = a 1,2-diacylglycerol + CoA. It carries out the reaction 1-dodecanoylglycerol + (9Z)-octadecenoyl-CoA = 1-dodecanoyl-2-(9Z-octadecenoyl)-glycerol + CoA. It catalyses the reaction 1-tetradecanoylglycerol + (9Z)-octadecenoyl-CoA = 1-tetradecanoyl-2-(9Z-octadecenoyl)-glycerol + CoA. The catalysed reaction is 1-hexadecanoylglycerol + (9Z)-octadecenoyl-CoA = 1-hexadecanoyl-2-(9Z-octadecenoyl)-glycerol + CoA. The enzyme catalyses 1-(9Z-octadecenoyl)-glycerol + (9Z)-octadecenoyl-CoA = 1,2-di-(9Z-octadecenoyl)-glycerol + CoA. It carries out the reaction 1-(9Z,12Z-octadecadienoyl)-glycerol + (9Z)-octadecenoyl-CoA = 1-(9Z,12Z-octadecadienoyl)-2-(9Z-octadecenoyl)-glycerol + CoA. It catalyses the reaction 1-(9Z,12Z,15Z-octadecatrienoyl)-glycerol + (9Z)-octadecenoyl-CoA = 1-(9Z,12Z,15Z-octadecatrienoyl)-2-(9Z-octadecenoyl)-glycerol + CoA. The catalysed reaction is 1-(5Z,8Z,11Z,14Z-eicosatetraenoyl)-glycerol + (9Z)-octadecenoyl-CoA = 1-(5Z,8Z,11Z,14Z-eicosatetraenoyl)-2-(9Z-octadecenoyl)-glycerol + CoA. The enzyme catalyses a 1-acylglycerol + an acyl-CoA = a 1,3-diacylglycerol + CoA. It carries out the reaction 1-dodecanoylglycerol + (9Z)-octadecenoyl-CoA = 1-dodecanoyl-3-(9Z-octadecenoyl)-glycerol + CoA. It catalyses the reaction 1-hexadecanoylglycerol + (9Z)-octadecenoyl-CoA = 1-(9Z-octadecenoyl)-3-hexadecanoylglycerol + CoA. The catalysed reaction is 1-octadecanoylglycerol + (9Z)-octadecenoyl-CoA = 1-octadecanoyl-3-(9Z-octadecenoyl)-glycerol + CoA. The enzyme catalyses 1-(9Z-octadecenoyl)-sn-glycerol + (9Z)-octadecenoyl-CoA = 1,3-di-(9Z-octadecenoyl)-glycerol + CoA. It carries out the reaction 1-(9Z,12Z-octadecadienoyl)-glycerol + (9Z)-octadecenoyl-CoA = 1-(9Z-octadecenoyl)-3-(9Z,12Z-octadecadienoyl)-glycerol + CoA. It catalyses the reaction 1-(9Z,12Z,15Z-octadecatrienoyl)-glycerol + (9Z)-octadecenoyl-CoA = 1-(9Z,12Z,15Z-octadecatrienoyl)-3-(9Z-octadecenoyl)-glycerol + CoA. The catalysed reaction is a 1-acyl-sn-glycerol + an acyl-CoA = a 1,3-diacyl-sn-glycerol + CoA. The enzyme catalyses a 3-acyl-sn-glycerol + an acyl-CoA = a 1,3-diacyl-sn-glycerol + CoA. It carries out the reaction 3-octadecanoyl-sn-glycerol + (9Z)-octadecenoyl-CoA = 1-(9Z-octadecenoyl)-3-octadecanoyl-sn-glycerol + CoA. Its pathway is glycerolipid metabolism; triacylglycerol biosynthesis. Involved in glycerolipid synthesis and lipid metabolism. Catalyzes the formation of diacylglycerol, the precursor of triacylglycerol, by transferring the acyl chain of a fatty acyl-CoA to a monoacylglycerol, mainly at the sn-1 or sn-3 positions. It uses both sn-2-monoacylglycerol (2-acylglycerol) and sn-1-monoacylglycerol (1-acyl-sn-glycerol) equally well as substrates, and uses sn-3-monoacylglycerol (3-acyl-sn-glycerol) with lower efficiency. Probably not involved in absorption of dietary fat in the small intestine. This is 2-acylglycerol O-acyltransferase 1 from Mus musculus (Mouse).